A 389-amino-acid chain; its full sequence is Inner membrane transport protein YdhP (389 aa).

At 1-6 (MKINYP) the chain is on the cytoplasmic side. A helical transmembrane segment spans residues 7-27 (LLALAIGAFGIGTTEFSPMGL). Residues 28 to 43 (LPVIARGVDVSIPAAG) lie on the Periplasmic side of the membrane. Residues 44-64 (MLISAYAVGVMVGAPLMTLLL) traverse the membrane as a helical segment. The Cytoplasmic segment spans residues 65–70 (SHRARR). The chain crosses the membrane as a helical span at residues 71–91 (SALIFLMAIFTLGNVLSAIAP). The Periplasmic segment spans residues 92-100 (DYMTLMLSR). Residues 101–121 (ILTSLNHGAFFGLGSVVAASV) traverse the membrane as a helical segment. Over 122 to 130 (VPKHKQASA) the chain is Cytoplasmic. A helical membrane pass occupies residues 131-151 (VATMFMGLTLANIGGVPAATW). Residues 152 to 159 (LGETIGWR) are Periplasmic-facing. Residues 160–180 (MSFLATAGLGVISMVSLFFSL) traverse the membrane as a helical segment. Residues 181–203 (PKGGAGARPEVKKELAVLMRPQV) lie on the Cytoplasmic side of the membrane. A helical membrane pass occupies residues 204-224 (LSALLTTVLGAGAMFTLYTYI). Residues 225–236 (SPVLQSITHATP) lie on the Periplasmic side of the membrane. Residues 237–257 (VFVTAMLVLIGVGFSIGNYLG) traverse the membrane as a helical segment. Residues 258–266 (GKLADRSVN) are Cytoplasmic-facing. Residues 267-287 (GTLKGFLLLLMVIMLAIPFLA) traverse the membrane as a helical segment. The Periplasmic portion of the chain corresponds to 288-290 (RNK). The chain crosses the membrane as a helical span at residues 291-311 (FGAAISMAVWGAATFAVVPPL). At 312-330 (QMRVMRVASEAPGLSSSVN) the chain is on the cytoplasmic side. The helical transmembrane segment at 331-351 (IGAFNLGNALGAAAGGAVISA) threads the bilayer. Residues 352 to 356 (GLGYS) lie on the Periplasmic side of the membrane. A helical membrane pass occupies residues 357–377 (FVPVMGAIVAGLALLLVFMSA). The Cytoplasmic segment spans residues 378–389 (RKQPETVCVANS).

This sequence belongs to the major facilitator superfamily.

It is found in the cell inner membrane. This Escherichia coli O157:H7 protein is Inner membrane transport protein YdhP (ydhP).